The sequence spans 460 residues: WD repeat-containing protein 41 (460 aa).

WD repeat units follow at residues 40-79 (EAHR…KLLE), 82-128 (GHTQ…QIQR), 131-168 (CFQS…LCKT), 220-258 (DHQD…VQAC), 321-359 (AHDS…QLAA), and 403-441 (GHSS…SGVR).

Component of the C9orf72-SMCR8 complex, at least composed of C9orf72, SMCR8 and WDR41. The complex is formed of two protomers, each individually consisting of one molecule each of C9orf72, SMCR8 and WDR41. The protomers homodimerize via an interaction between C9orf72 (via C-terminus) and SMCR8 (via N-terminus). Within each protomer SMCR8 (via DENN domain) acts as a bridging protein between WDR41 (via C-terminus and N-terminus) and C9orf72 (via C-terminus). The C9orf72-SMCR8 complex associates with the ULK1/ATG1 kinase complex.

It is found in the cytoplasm. Functionally, non-catalytic component of the C9orf72-SMCR8 complex, a complex that has guanine nucleotide exchange factor (GEF) activity and regulates autophagy. The C9orf72-SMCR8 complex promotes the exchange of GDP to GTP, converting inactive GDP-bound RAB8A and RAB39B into their active GTP-bound form, thereby promoting autophagosome maturation. As part of the C9orf72-SMCR8 complex, stimulates RAB8A and RAB11A GTPase activity in vitro, however WDR42 is shown not be an essential complex component for this function. The C9orf72-SMCR8 complex also acts as a negative regulator of autophagy initiation by interacting with the ULK1/ATG1 kinase complex and inhibiting its protein kinase activity. The protein is WD repeat-containing protein 41 of Mus musculus (Mouse).